The chain runs to 396 residues: uncharacterized protein (396 aa).

Transmembrane regions (helical) follow at residues 27–47 (LLIA…QICL) and 69–89 (FIVL…NVTF). The short motif at 117–122 (HQMYAD) is the HXXXXD motif element. A run of 2 helical transmembrane segments spans residues 123–143 (WIYL…YIIL) and 372–392 (LTPR…VFVM).

This sequence belongs to the 1-acyl-sn-glycerol-3-phosphate acyltransferase family.

The protein localises to the membrane. This is an uncharacterized protein from Saccharomyces cerevisiae (strain ATCC 204508 / S288c) (Baker's yeast).